We begin with the raw amino-acid sequence, 1312 residues long: AT-rich interactive domain-containing protein 4B (1312 aa).

2 disordered regions span residues 124–166 and 266–306; these read PLTN…EDDR and KTEL…EPFP. Residues serine 276, serine 295, and serine 296 each carry the phosphoserine modification. Residues 277 to 305 show a composition bias toward acidic residues; that stretch reads EAEEEEEEEDDEKEKEDNSSEEEEEIEPF. The ARID domain maps to 306–398; that stretch reads PEERENFLQQ…YLYGFEEYCR (93 aa). Residues lysine 429, lysine 440, and lysine 462 each participate in a glycyl lysine isopeptide (Lys-Gly) (interchain with G-Cter in SUMO2) cross-link. Disordered stretches follow at residues 458–577, 635–680, 708–894, 909–1212, and 1252–1288; these read EIER…KVQV, IKHR…EMVS, QASE…TTGF, LNNS…NRLP, and SEVA…SITA. Positions 465–473 are antigenic epitope; sequence IKPSLGSKK. Phosphoserine is present on serine 483. Basic and acidic residues predominate over residues 483–496; the sequence is SDQEKEVNIKKPED. Lysine 517 is covalently cross-linked (Glycyl lysine isopeptide (Lys-Gly) (interchain with G-Cter in SUMO2)). Acidic residues predominate over residues 532 to 567; the sequence is NKEEDEDDEEAEEEEEEEEEEEDEDDDDNNEEEEFE. The Tudor-knot domain maps to 572 to 624; it reads GMKVQVRYGRGKNQKMYEASIKDSDVEGGEVLYLVHYCGWNVRYDEWIKADKI. Over residues 643–656 the composition is skewed to basic and acidic residues; it reads NKLDKEKDKDEKYS. A phosphoserine mark is found at serine 666, serine 675, and serine 717. 2 stretches are compositionally biased toward basic and acidic residues: residues 722–754 and 778–787; these read ERGA…KEEQ and SPERLRKDIE. A coiled-coil region spans residues 728-754; it reads MDNNGKEESKIDHLTNNRNDLISKEEQ. Residue lysine 751 forms a Glycyl lysine isopeptide (Lys-Gly) (interchain with G-Cter in SUMO2) linkage. Phosphoserine occurs at positions 778 and 790. Residues 788–799 show a composition bias toward acidic residues; sequence VLSEDTDYEEDE. Threonine 793 carries the phosphothreonine modification. Basic and acidic residues-rich tracts occupy residues 807–816, 828–852, 909–927, and 995–1010; these read VKKDTTDKSS, CNTE…KESL, LNNS…RKDV, and KPIE…RKAE. Position 1014 is a phosphoserine (serine 1014). Residue threonine 1026 is modified to Phosphothreonine. The segment covering 1028–1037 has biased composition (low complexity); it reads ESPSSVTVTE. Serine 1029 bears the Phosphoserine mark. Polar residues predominate over residues 1038 to 1047; that stretch reads GSRQQSSVTV. A compositionally biased stretch (basic and acidic residues) spans 1056-1065; it reads EEVRSIKSET. The segment covering 1087 to 1101 has biased composition (low complexity); it reads SSPAGFDASVSSSSS. Residues 1130 to 1137 are antigenic epitope; that stretch reads KKQKRSHK. Over residues 1130-1148 the composition is skewed to basic residues; that stretch reads KKQKRSHKATVVNNKKKGK. Threonine 1150 is subject to Phosphothreonine. Phosphoserine is present on residues serine 1152, serine 1153, serine 1155, and serine 1159. Polar residues predominate over residues 1162-1191; it reads ESITKSQPVKSVSTGMKSHSTKSPARTQSP. The segment covering 1196–1208 has biased composition (basic and acidic residues); it reads KNGDKDPDLKEPS. Residues 1231–1270 are a coiled coil; it reads ERITILQEKLQEIRKHYLSLKSEVASIDRRRKRLKKKERE. Low complexity predominate over residues 1272-1288; the sequence is AATSSSSSSPSSSSITA.

Component of a Sin3A corepressor complex consisting of SIN3A, SAP130, SUDS3/SAP45, SAP180, HDAC1 and HDAC2. Interacts with ARID4A. Interacts with AR. Highly expressed in the testis and in breast, lung, colon, pancreatic and ovarian cancers. Expressed at low levels in the thymus, prostate and ovary.

The protein resides in the nucleus. The protein localises to the cytoplasm. Functionally, acts as a transcriptional repressor. May function in the assembly and/or enzymatic activity of the Sin3A corepressor complex or in mediating interactions between the complex and other regulatory complexes. Plays a role in the regulation of epigenetic modifications at the PWS/AS imprinting center near the SNRPN promoter, where it might function as part of a complex with RB1 and ARID4A. Involved in spermatogenesis, together with ARID4A, where it functions as a transcriptional coactivator for AR (androgen receptor) and enhances expression of genes required for sperm maturation. Regulates expression of the tight junction protein CLDN3 in the testis, which is important for integrity of the blood-testis barrier. Plays a role in myeloid homeostasis where it regulates the histone methylation state of bone marrow cells and expression of various genes involved in hematopoiesis. May function as a leukemia suppressor. This chain is AT-rich interactive domain-containing protein 4B (ARID4B), found in Homo sapiens (Human).